Reading from the N-terminus, the 572-residue chain is Mitochondrial chaperone TCM62 (572 aa).

The N-terminal 16 residues, 1–16 (MLRNCLRKLGNHQTKC), are a transit peptide targeting the mitochondrion. Over 17-471 (SVKTLHTPIY…KANEPNFMTK (455 aa)) the chain is Mitochondrial matrix. Residues 472-488 (VGINAVLSAVILPSEVA) traverse the membrane as a helical segment. The Mitochondrial intermembrane portion of the chain corresponds to 489-572 (FKNAYGYNYY…VYKKPERHKA (84 aa)).

This sequence belongs to the chaperonin (HSP60) family. Forms a high molecular mass protein complex of approximately 850 kDa.

The protein localises to the mitochondrion inner membrane. Functionally, chaperone. Required for the assembly of succinate dehydrogenase subunits. Ensures mitochondrial gene expression at elevated temperatures and prevents heat-aggregation of the ribosomal subunit VAR1. The chain is Mitochondrial chaperone TCM62 (TCM62) from Saccharomyces cerevisiae (strain ATCC 204508 / S288c) (Baker's yeast).